The sequence spans 443 residues: ATP-dependent protease ATPase subunit HslU (443 aa).

ATP contacts are provided by residues Ile20, Gly62–Glu67, Asp255, Glu321, and Arg393.

The protein belongs to the ClpX chaperone family. HslU subfamily. As to quaternary structure, a double ring-shaped homohexamer of HslV is capped on each side by a ring-shaped HslU homohexamer. The assembly of the HslU/HslV complex is dependent on binding of ATP.

The protein resides in the cytoplasm. Functionally, ATPase subunit of a proteasome-like degradation complex; this subunit has chaperone activity. The binding of ATP and its subsequent hydrolysis by HslU are essential for unfolding of protein substrates subsequently hydrolyzed by HslV. HslU recognizes the N-terminal part of its protein substrates and unfolds these before they are guided to HslV for hydrolysis. The protein is ATP-dependent protease ATPase subunit HslU of Helicobacter pylori (strain J99 / ATCC 700824) (Campylobacter pylori J99).